The following is a 337-amino-acid chain: UDP-glucose 4-epimerase (337 aa).

Residues 11-12 (YI), 31-36 (DNLSNA), 58-59 (DL), 80-84 (FAGLK), asparagine 99, serine 124, tyrosine 149, lysine 153, and phenylalanine 178 contribute to the NAD(+) site. Substrate-binding residues include serine 124 and tyrosine 149. The active-site Proton acceptor is tyrosine 149. Residues asparagine 179, 199-200 (NL), 216-218 (GIF), arginine 231, and 292-295 (RDGD) contribute to the substrate site.

This sequence belongs to the NAD(P)-dependent epimerase/dehydratase family. In terms of assembly, homodimer. It depends on NAD(+) as a cofactor.

It carries out the reaction UDP-alpha-D-glucose = UDP-alpha-D-galactose. It functions in the pathway carbohydrate metabolism; galactose metabolism. Its function is as follows. Involved in the metabolism of galactose. Catalyzes the conversion of UDP-galactose (UDP-Gal) to UDP-glucose (UDP-Glc) through a mechanism involving the transient reduction of NAD. This chain is UDP-glucose 4-epimerase (galE), found in Erwinia amylovora (Fire blight bacteria).